Here is a 274-residue protein sequence, read N- to C-terminus: Protein LNK4 (274 aa).

The segment at asparagine 209–glycine 249 is disordered. The segment covering glutamate 223–leucine 235 has biased composition (basic and acidic residues). Residues asparagine 236 to glycine 249 are compositionally biased toward polar residues.

Interacts with REV8.

Its function is as follows. Probable transcriptional coactivator. This chain is Protein LNK4, found in Arabidopsis thaliana (Mouse-ear cress).